A 70-amino-acid chain; its full sequence is Insulin (70 aa).

3 disulfides stabilise this stretch: Cys-7-Cys-56, Cys-19-Cys-69, and Cys-55-Cys-60. Positions 33 to 49 are cleaved as a propeptide — c peptide; that stretch reads FVDSLAGYSKHQNGGIS.

This sequence belongs to the insulin family. As to quaternary structure, heterodimer of a B chain and an A chain linked by two disulfide bonds.

Its subcellular location is the secreted. In terms of biological role, insulin decreases blood glucose concentration. It increases cell permeability to monosaccharides, amino acids and fatty acids. It accelerates glycolysis, the pentose phosphate cycle, and glycogen synthesis in liver. This is Insulin (ins) from Torpedo marmorata (Marbled electric ray).